We begin with the raw amino-acid sequence, 285 residues long: Diphthine methyl ester synthase (285 aa).

S-adenosyl-L-methionine is bound by residues Leu9, Asp84, Gly87, 112–113 (SI), Leu163, Val221, and His246.

Belongs to the diphthine synthase family.

It localises to the cytoplasm. The catalysed reaction is 2-[(3S)-amino-3-carboxypropyl]-L-histidyl-[translation elongation factor 2] + 4 S-adenosyl-L-methionine = diphthine methyl ester-[translation elongation factor 2] + 4 S-adenosyl-L-homocysteine + 3 H(+). Its pathway is protein modification; peptidyl-diphthamide biosynthesis. In terms of biological role, S-adenosyl-L-methionine-dependent methyltransferase that catalyzes four methylations of the modified target histidine residue in translation elongation factor 2 (EF-2), to form an intermediate called diphthine methyl ester. The four successive methylation reactions represent the second step of diphthamide biosynthesis. This Aspergillus fumigatus (strain ATCC MYA-4609 / CBS 101355 / FGSC A1100 / Af293) (Neosartorya fumigata) protein is Diphthine methyl ester synthase (dph5).